The sequence spans 476 residues: Bifunctional protein HldE (476 aa).

A ribokinase region spans residues 1–318; that stretch reads MKLDLTVLEQ…YTALHGDKLA (318 aa). 195–198 contributes to the ATP binding site; the sequence is NLGE. Residue Asp264 is part of the active site. The tract at residues 344–476 is cytidylyltransferase; that stretch reads MTNGCFDILH…MIDTILDREG (133 aa).

The protein in the N-terminal section; belongs to the carbohydrate kinase PfkB family. In the C-terminal section; belongs to the cytidylyltransferase family. In terms of assembly, homodimer.

It carries out the reaction D-glycero-beta-D-manno-heptose 7-phosphate + ATP = D-glycero-beta-D-manno-heptose 1,7-bisphosphate + ADP + H(+). The enzyme catalyses D-glycero-beta-D-manno-heptose 1-phosphate + ATP + H(+) = ADP-D-glycero-beta-D-manno-heptose + diphosphate. Its pathway is nucleotide-sugar biosynthesis; ADP-L-glycero-beta-D-manno-heptose biosynthesis; ADP-L-glycero-beta-D-manno-heptose from D-glycero-beta-D-manno-heptose 7-phosphate: step 1/4. It functions in the pathway nucleotide-sugar biosynthesis; ADP-L-glycero-beta-D-manno-heptose biosynthesis; ADP-L-glycero-beta-D-manno-heptose from D-glycero-beta-D-manno-heptose 7-phosphate: step 3/4. Catalyzes the phosphorylation of D-glycero-D-manno-heptose 7-phosphate at the C-1 position to selectively form D-glycero-beta-D-manno-heptose-1,7-bisphosphate. Functionally, catalyzes the ADP transfer from ATP to D-glycero-beta-D-manno-heptose 1-phosphate, yielding ADP-D-glycero-beta-D-manno-heptose. The polypeptide is Bifunctional protein HldE (Chromohalobacter salexigens (strain ATCC BAA-138 / DSM 3043 / CIP 106854 / NCIMB 13768 / 1H11)).